Consider the following 61-residue polypeptide: MSEIEGIVKSGVIIPLKPLTELEGKKIKIKIVDAESVDAEKLYSYLRLLREGEDARDFFKI.

The protein belongs to the UPF0165 family.

Functionally, possibly the antitoxin component of a type II toxin-antitoxin (TA) system. This is Putative antitoxin APE_0472b.1 from Aeropyrum pernix (strain ATCC 700893 / DSM 11879 / JCM 9820 / NBRC 100138 / K1).